The following is a 390-amino-acid chain: Succinate--CoA ligase [ADP-forming] subunit beta (390 aa).

The ATP-grasp domain occupies 9-248 (KEILRRHKAN…ITEEDPLEVQ (240 aa)). Residues K50, 57 to 59 (GRG), E103, I106, and E111 each bind ATP. The Mg(2+) site is built by N203 and D217. Substrate contacts are provided by residues N268 and 325–327 (GIV).

Belongs to the succinate/malate CoA ligase beta subunit family. Heterotetramer of two alpha and two beta subunits. Requires Mg(2+) as cofactor.

The catalysed reaction is succinate + ATP + CoA = succinyl-CoA + ADP + phosphate. It carries out the reaction GTP + succinate + CoA = succinyl-CoA + GDP + phosphate. Its pathway is carbohydrate metabolism; tricarboxylic acid cycle; succinate from succinyl-CoA (ligase route): step 1/1. Functionally, succinyl-CoA synthetase functions in the citric acid cycle (TCA), coupling the hydrolysis of succinyl-CoA to the synthesis of either ATP or GTP and thus represents the only step of substrate-level phosphorylation in the TCA. The beta subunit provides nucleotide specificity of the enzyme and binds the substrate succinate, while the binding sites for coenzyme A and phosphate are found in the alpha subunit. This is Succinate--CoA ligase [ADP-forming] subunit beta from Leptospira borgpetersenii serovar Hardjo-bovis (strain JB197).